We begin with the raw amino-acid sequence, 1488 residues long: Chromosome partition protein MukB (1488 aa).

Gly-34–Ser-41 is a binding site for ATP. 3 coiled-coil regions span residues Leu-326 to Gln-418, Leu-444 to His-472, and Arg-509 to Pro-602. Positions Pro-666–Arg-783 are flexible hinge. 3 coiled-coil regions span residues Glu-835–Glu-923, Glu-977–Gly-1116, and Val-1209–Val-1265. Residues Ala-1049–Arg-1074 form a disordered region. Residues Ser-1051–His-1065 show a composition bias toward basic and acidic residues.

The protein belongs to the SMC family. MukB subfamily. In terms of assembly, homodimerization via its hinge domain. Binds to DNA via its C-terminal region. Interacts, and probably forms a ternary complex, with MukE and MukF via its C-terminal region. The complex formation is stimulated by calcium or magnesium. Interacts with tubulin-related protein FtsZ.

It localises to the cytoplasm. Its subcellular location is the nucleoid. Its function is as follows. Plays a central role in chromosome condensation, segregation and cell cycle progression. Functions as a homodimer, which is essential for chromosome partition. Involved in negative DNA supercoiling in vivo, and by this means organize and compact chromosomes. May achieve or facilitate chromosome segregation by condensation DNA from both sides of a centrally located replisome during cell division. This Salmonella schwarzengrund (strain CVM19633) protein is Chromosome partition protein MukB.